Reading from the N-terminus, the 107-residue chain is Phosphoribosyl-ATP pyrophosphatase (107 aa).

This sequence belongs to the PRA-PH family.

The protein localises to the cytoplasm. The enzyme catalyses 1-(5-phospho-beta-D-ribosyl)-ATP + H2O = 1-(5-phospho-beta-D-ribosyl)-5'-AMP + diphosphate + H(+). It participates in amino-acid biosynthesis; L-histidine biosynthesis; L-histidine from 5-phospho-alpha-D-ribose 1-diphosphate: step 2/9. This chain is Phosphoribosyl-ATP pyrophosphatase (hisE), found in Caulobacter vibrioides (strain ATCC 19089 / CIP 103742 / CB 15) (Caulobacter crescentus).